A 431-amino-acid chain; its full sequence is Serine/threonine-protein kinase Sgk1 (431 aa).

The tract at residues 58–93 (LNLTPPQDPELMNSNPSPPPSPSQQINLGPSSNPSA) is disordered. The segment covering 81 to 93 (QQINLGPSSNPSA) has biased composition (polar residues). The Protein kinase domain occupies 98–355 (FHFLKVIGKG…FTEIKNHVFF (258 aa)). ATP contacts are provided by residues 104–112 (IGKGSFGKV) and lysine 127. Aspartate 222 (proton acceptor) is an active-site residue. Residues 356–431 (SPINWDDLNA…SYAPSMDSYL (76 aa)) form the AGC-kinase C-terminal domain.

It belongs to the protein kinase superfamily. AGC Ser/Thr protein kinase family.

It is found in the cytoplasm. It localises to the nucleus. The protein resides in the endoplasmic reticulum. It catalyses the reaction L-seryl-[protein] + ATP = O-phospho-L-seryl-[protein] + ADP + H(+). It carries out the reaction L-threonyl-[protein] + ATP = O-phospho-L-threonyl-[protein] + ADP + H(+). Protein kinase that may play an important role in cellular stress response. May be involved in the regulation of processes such as cell survival, neuronal excitability and renal sodium excretion. This chain is Serine/threonine-protein kinase Sgk1 (sgk1), found in Fundulus heteroclitus (Killifish).